The following is a 321-amino-acid chain: Lipoyl synthase (321 aa).

The [4Fe-4S] cluster site is built by cysteine 68, cysteine 73, cysteine 79, cysteine 94, cysteine 98, cysteine 101, and serine 308. One can recognise a Radical SAM core domain in the interval 80–297 (FNHGTATFMI…REFAESIGFT (218 aa)).

The protein belongs to the radical SAM superfamily. Lipoyl synthase family. Requires [4Fe-4S] cluster as cofactor.

Its subcellular location is the cytoplasm. The catalysed reaction is [[Fe-S] cluster scaffold protein carrying a second [4Fe-4S](2+) cluster] + N(6)-octanoyl-L-lysyl-[protein] + 2 oxidized [2Fe-2S]-[ferredoxin] + 2 S-adenosyl-L-methionine + 4 H(+) = [[Fe-S] cluster scaffold protein] + N(6)-[(R)-dihydrolipoyl]-L-lysyl-[protein] + 4 Fe(3+) + 2 hydrogen sulfide + 2 5'-deoxyadenosine + 2 L-methionine + 2 reduced [2Fe-2S]-[ferredoxin]. It participates in protein modification; protein lipoylation via endogenous pathway; protein N(6)-(lipoyl)lysine from octanoyl-[acyl-carrier-protein]: step 2/2. In terms of biological role, catalyzes the radical-mediated insertion of two sulfur atoms into the C-6 and C-8 positions of the octanoyl moiety bound to the lipoyl domains of lipoate-dependent enzymes, thereby converting the octanoylated domains into lipoylated derivatives. The protein is Lipoyl synthase of Shewanella sediminis (strain HAW-EB3).